A 391-amino-acid chain; its full sequence is MIGTPYTEGARRAMLLGCGELGKEVAIELQRLGVEVIGVDRYPNAPAMQIAHRSHVINMLDAKALRAIIELEKPHLVIPEIEAIATQTLVEMETEGLNVVPTARATQLTMDREGIRRLAAETLGLPTSPYFFCDTETEFNQAIGKIGVPCVVKPVMSSSGKGQSVIRDAAQSTKAWQYAQEGGRAGGGRVIVEGFIPFDYEITLLTISAVNGIHFCAPIGHRQEDGDYRESWQPQAMSADVLAKSQAIASKVVEALGGYGLFGVELFVKGSDVYFSEVSPRPHDTGLVTLISQDLSEFALHVRAILGLPIPNIHQHGPSASAVVLVEGKSKNIRYQGLADALAAENTQLRLFAKPEIDGRRRLGVALARDKDIESAVNKALDSASKVKVIF.

Residues 20–21 and E80 each bind N(1)-(5-phospho-beta-D-ribosyl)glycinamide; that span reads EL. Residues R112, K153, 158–163, 193–196, and E201 contribute to the ATP site; these read SSGKGQ and EGFI. Residues 117-306 form the ATP-grasp domain; the sequence is RLAAETLGLP…EFALHVRAIL (190 aa). Residues E265 and E277 each coordinate Mg(2+). N(1)-(5-phospho-beta-D-ribosyl)glycinamide contacts are provided by residues D284, K354, and 361–362; that span reads RR.

Belongs to the PurK/PurT family. Homodimer.

The enzyme catalyses N(1)-(5-phospho-beta-D-ribosyl)glycinamide + formate + ATP = N(2)-formyl-N(1)-(5-phospho-beta-D-ribosyl)glycinamide + ADP + phosphate + H(+). The protein operates within purine metabolism; IMP biosynthesis via de novo pathway; N(2)-formyl-N(1)-(5-phospho-D-ribosyl)glycinamide from N(1)-(5-phospho-D-ribosyl)glycinamide (formate route): step 1/1. Its function is as follows. Involved in the de novo purine biosynthesis. Catalyzes the transfer of formate to 5-phospho-ribosyl-glycinamide (GAR), producing 5-phospho-ribosyl-N-formylglycinamide (FGAR). Formate is provided by PurU via hydrolysis of 10-formyl-tetrahydrofolate. This is Formate-dependent phosphoribosylglycinamide formyltransferase from Shewanella sp. (strain ANA-3).